Consider the following 133-residue polypeptide: Ribosome-binding factor A (133 aa).

Belongs to the RbfA family. Monomer. Binds 30S ribosomal subunits, but not 50S ribosomal subunits or 70S ribosomes.

The protein resides in the cytoplasm. One of several proteins that assist in the late maturation steps of the functional core of the 30S ribosomal subunit. Associates with free 30S ribosomal subunits (but not with 30S subunits that are part of 70S ribosomes or polysomes). Required for efficient processing of 16S rRNA. May interact with the 5'-terminal helix region of 16S rRNA. This chain is Ribosome-binding factor A, found in Alteromonas mediterranea (strain DSM 17117 / CIP 110805 / LMG 28347 / Deep ecotype).